The sequence spans 452 residues: Pup--protein ligase (452 aa).

Position 9 (glutamate 9) interacts with Mg(2+). Arginine 53 serves as a coordination point for ATP. A Mg(2+)-binding site is contributed by tyrosine 55. The active-site Proton acceptor is the aspartate 57. Residue glutamate 63 participates in Mg(2+) binding. ATP contacts are provided by threonine 66 and tryptophan 419.

Belongs to the Pup ligase/Pup deamidase family. Pup-conjugating enzyme subfamily.

The catalysed reaction is ATP + [prokaryotic ubiquitin-like protein]-L-glutamate + [protein]-L-lysine = ADP + phosphate + N(6)-([prokaryotic ubiquitin-like protein]-gamma-L-glutamyl)-[protein]-L-lysine.. It participates in protein degradation; proteasomal Pup-dependent pathway. Its pathway is protein modification; protein pupylation. Functionally, catalyzes the covalent attachment of the prokaryotic ubiquitin-like protein modifier Pup to the proteasomal substrate proteins, thereby targeting them for proteasomal degradation. This tagging system is termed pupylation. The ligation reaction involves the side-chain carboxylate of the C-terminal glutamate of Pup and the side-chain amino group of a substrate lysine. The sequence is that of Pup--protein ligase from Saccharomonospora viridis (strain ATCC 15386 / DSM 43017 / JCM 3036 / CCUG 5913 / NBRC 12207 / NCIMB 9602 / P101) (Thermoactinomyces viridis).